A 235-amino-acid chain; its full sequence is Large ribosomal subunit protein uL4 (235 aa).

Residues 45-75 (RAGTASTKTRGEVSGGGRKPWPQKHTGRARH) are disordered. The span at 65–75 (WPQKHTGRARH) shows a compositional bias: basic residues.

The protein belongs to the universal ribosomal protein uL4 family. In terms of assembly, part of the 50S ribosomal subunit.

Its function is as follows. One of the primary rRNA binding proteins, this protein initially binds near the 5'-end of the 23S rRNA. It is important during the early stages of 50S assembly. It makes multiple contacts with different domains of the 23S rRNA in the assembled 50S subunit and ribosome. Forms part of the polypeptide exit tunnel. This Thermotoga petrophila (strain ATCC BAA-488 / DSM 13995 / JCM 10881 / RKU-1) protein is Large ribosomal subunit protein uL4.